The chain runs to 161 residues: Protein-export protein SecB (161 aa).

The protein belongs to the SecB family. Homotetramer, a dimer of dimers. One homotetramer interacts with 1 SecA dimer.

The protein resides in the cytoplasm. Functionally, one of the proteins required for the normal export of preproteins out of the cell cytoplasm. It is a molecular chaperone that binds to a subset of precursor proteins, maintaining them in a translocation-competent state. It also specifically binds to its receptor SecA. This chain is Protein-export protein SecB, found in Ectopseudomonas mendocina (strain ymp) (Pseudomonas mendocina).